Consider the following 296-residue polypeptide: Non-homologous end joining protein Ku (296 aa).

The Ku domain occupies 11 to 187; the sequence is TFGLVNIPVK…ELPEAGEPSS (177 aa). Residues 254-296 are disordered; it reads AAARRRGDEHEAPARGERRHAAAAAARTTGRPRAARASRKKRG. The span at 258–273 shows a compositional bias: basic and acidic residues; sequence RRGDEHEAPARGERRH. Residues 275–285 are compositionally biased toward low complexity; sequence AAAAARTTGRP. The segment covering 286-296 has biased composition (basic residues); sequence RAARASRKKRG.

It belongs to the prokaryotic Ku family. In terms of assembly, homodimer. Interacts with LigD.

In terms of biological role, with LigD forms a non-homologous end joining (NHEJ) DNA repair enzyme, which repairs dsDNA breaks with reduced fidelity. Binds linear dsDNA with 5'- and 3'- overhangs but not closed circular dsDNA nor ssDNA. Recruits and stimulates the ligase activity of LigD. In Anaeromyxobacter sp. (strain K), this protein is Non-homologous end joining protein Ku.